The chain runs to 257 residues: Fructose-2,6-bisphosphatase TIGAR B (257 aa).

The Tele-phosphohistidine intermediate role is filled by histidine 11. The active-site Proton donor/acceptor is the glutamate 89.

This sequence belongs to the phosphoglycerate mutase family.

The protein resides in the cytoplasm. It is found in the nucleus. Its subcellular location is the mitochondrion. The enzyme catalyses beta-D-fructose 2,6-bisphosphate + H2O = beta-D-fructose 6-phosphate + phosphate. Its function is as follows. Fructose-bisphosphatase hydrolyzing fructose-2,6-bisphosphate as well as fructose-1,6-bisphosphate. Acts as a negative regulator of glycolysis by lowering intracellular levels of fructose-2,6-bisphosphate in a p53/TP53-dependent manner, resulting in the pentose phosphate pathway (PPP) activation and NADPH production. Contributes to the generation of reduced glutathione to cause a decrease in intracellular reactive oxygen species (ROS) content, correlating with its ability to protect cells from oxidative or metabolic stress-induced cell death. May play a role in mitophagy inhibition. The polypeptide is Fructose-2,6-bisphosphatase TIGAR B (Danio rerio (Zebrafish)).